We begin with the raw amino-acid sequence, 573 residues long: Adenine deaminase (573 aa).

This sequence belongs to the metallo-dependent hydrolases superfamily. Adenine deaminase family. It depends on Mn(2+) as a cofactor.

The enzyme catalyses adenine + H2O + H(+) = hypoxanthine + NH4(+). In Bacillus licheniformis (strain ATCC 14580 / DSM 13 / JCM 2505 / CCUG 7422 / NBRC 12200 / NCIMB 9375 / NCTC 10341 / NRRL NRS-1264 / Gibson 46), this protein is Adenine deaminase.